We begin with the raw amino-acid sequence, 319 residues long: Olfactory receptor 2S2 (319 aa).

The Extracellular segment spans residues 1 to 26; sequence MEKANETSPVMGFVLLRLSAHPELEK. N-linked (GlcNAc...) asparagine glycosylation is present at Asn-5. Residues 27 to 50 form a helical membrane-spanning segment; the sequence is TFFVLILLMYLVILLGNGVLILVT. Residues 51-58 lie on the Cytoplasmic side of the membrane; sequence ILDSRLHT. Residues 59-80 traverse the membrane as a helical segment; it reads PMYFFLGNLSFLDICFTTSSVP. The Extracellular segment spans residues 81–101; the sequence is LVLDSFLTPQETISFSACAVQ. A disulfide bridge connects residues Cys-98 and Cys-190. The helical transmembrane segment at 102 to 121 threads the bilayer; it reads MALSFAMAGTECLLLSMMAF. At 122–140 the chain is on the cytoplasmic side; sequence DRYVAICNPLRYSVIMSKA. Residues 141–159 form a helical membrane-spanning segment; sequence AYMPMAASSWAIGGAASVV. The Extracellular segment spans residues 160–196; the sequence is HTSLAIQLPFCGDNVINHFTCEILAVLKLACADISIN. The helical transmembrane segment at 197 to 220 threads the bilayer; that stretch reads VISMEVTNVIFLGVPVLFISFSYV. The Cytoplasmic portion of the chain corresponds to 221–237; the sequence is FIITTILRIPSAEGRKK. The chain crosses the membrane as a helical span at residues 238–260; sequence VFSTCSAHLTVVIVFYGTLFFMY. Topologically, residues 261-279 are extracellular; that stretch reads GKPKSKDSMGADKEDLSDK. The helical transmembrane segment at 280 to 299 threads the bilayer; it reads LIPLFYGVVTPMLNPIIYSL. Over 300–319 the chain is Cytoplasmic; it reads RNKDVKAAVRRLLRPKGFTQ.

The protein belongs to the G-protein coupled receptor 1 family.

The protein localises to the cell membrane. Its function is as follows. Odorant receptor. The polypeptide is Olfactory receptor 2S2 (OR2S2) (Homo sapiens (Human)).